Reading from the N-terminus, the 218-residue chain is MRIILLGAPGAGKGTQAKIIEQKYNIAHISTGDMIRETIKSGSALGQELKKVLDAGELVSDEFIIKIVKDRISKNDCNNGFLLDGVPRTIPQAQELDKLGVNIDYIVEVDVADNLLIERITGRRIHPASGRTYHTKFNPPKVADKDDVTGEPLITRTDDNEDTVKQRLSVYHAQTAKLIDFYRNFSSTNTKIPKYIKINGDQAVEKVSQDIFDQLNKR.

10 to 15 (GAGKGT) contributes to the ATP binding site. The segment at 30 to 59 (STGDMIRETIKSGSALGQELKKVLDAGELV) is NMP. AMP-binding positions include Thr31, Arg36, 57–59 (ELV), and Gln92. The interval 122–159 (GRRIHPASGRTYHTKFNPPKVADKDDVTGEPLITRTDD) is LID. Residues Arg123 and 132 to 133 (TY) contribute to the ATP site. AMP is bound by residues Arg156 and Arg167. Gln202 serves as a coordination point for ATP.

The protein belongs to the adenylate kinase family. As to quaternary structure, monomer.

The protein localises to the cytoplasm. It carries out the reaction AMP + ATP = 2 ADP. The protein operates within purine metabolism; AMP biosynthesis via salvage pathway; AMP from ADP: step 1/1. Functionally, catalyzes the reversible transfer of the terminal phosphate group between ATP and AMP. Plays an important role in cellular energy homeostasis and in adenine nucleotide metabolism. In Francisella tularensis subsp. tularensis (strain FSC 198), this protein is Adenylate kinase.